The primary structure comprises 219 residues: Uracil-DNA glycosylase (219 aa).

Asp-61 acts as the Proton acceptor in catalysis.

This sequence belongs to the uracil-DNA glycosylase (UDG) superfamily. UNG family.

The protein localises to the cytoplasm. It carries out the reaction Hydrolyzes single-stranded DNA or mismatched double-stranded DNA and polynucleotides, releasing free uracil.. Its function is as follows. Excises uracil residues from the DNA which can arise as a result of misincorporation of dUMP residues by DNA polymerase or due to deamination of cytosine. This chain is Uracil-DNA glycosylase, found in Haemophilus influenzae (strain PittEE).